The sequence spans 613 residues: MPDFILTIDSDEEVDVSDSEQLQDINPDFKFQIDGETTNTLEEFDFQENKVKEVDLDEIIKKKGGLKEESDDEELALDGFGMGASKQEEEEEEEEEEVEVPEVKEVVEPEDSAEAIADFYEESSPQQTHTSFQTLQLSRPVLKGIAELKFTKPTPIQSASIPIALLGKDIVAGAQTGSGKTGAYMIPIIERLLYKPSTSTKVIILTPTRELALQVYEFGKKLSHHVNNLNIGLAVGGLNLRQQEEQLKTRPDIVIATPGRLIDHIRNSPSFSVQDIQVLVIDEADRMLEEGFQDELTEILSLIPKHKRQTLLFSATMNTRIQDLIQLSLQKPVRIMIDPPKSVASKLLQQFVRIRKRDQLKPALLYQLLKGVSSRVVVFVARKETAHRLRIVLGLLGLKVSELHGALTQEQRLQNVKNFKSLEVPVLICTDLAARGLDIPKIELVINYDMPKTFEIYLHRVGRTARAGRDGTSITFVGESSQERAIVKSAIVNGKGVAKTVDWKQAEETNKLLESKESVIDEVLEEEKEAKELLRAEMELTKASNLIKHEQEIHSRPKRTWFKGEVMEQLTKHGKKVNSKKRKANEVRKDEGRSYKKTKTDRMKISNKKKSKK.

Disordered regions lie at residues 1–20 and 79–104; these read MPDF…SDSE and GFGM…PEVK. 2 stretches are compositionally biased toward acidic residues: residues 9 to 18 and 88 to 100; these read DSDEEVDVSD and EEEE…EVEV. The Q motif signature appears at 130-158; the sequence is TSFQTLQLSRPVLKGIAELKFTKPTPIQS. Residues 161–335 enclose the Helicase ATP-binding domain; that stretch reads IPIALLGKDI…QLSLQKPVRI (175 aa). 174 to 181 is a binding site for ATP; the sequence is AQTGSGKT. The DEAD box motif lies at 282-285; it reads DEAD. Positions 364–541 constitute a Helicase C-terminal domain; sequence LLYQLLKGVS…ELLRAEMELT (178 aa). A coiled-coil region spans residues 504-552; that stretch reads KQAEETNKLLESKESVIDEVLEEEKEAKELLRAEMELTKASNLIKHEQE. The segment at 571–613 is disordered; the sequence is TKHGKKVNSKKRKANEVRKDEGRSYKKTKTDRMKISNKKKSKK. Residues 572–583 show a composition bias toward basic residues; that stretch reads KHGKKVNSKKRK. Residues 584-604 show a composition bias toward basic and acidic residues; that stretch reads ANEVRKDEGRSYKKTKTDRMK.

It belongs to the DEAD box helicase family. DDX27/DRS1 subfamily. As to quaternary structure, associates with pre-ribosomal particles.

It localises to the nucleus. Its subcellular location is the nucleolus. It catalyses the reaction ATP + H2O = ADP + phosphate + H(+). Its function is as follows. ATP-binding RNA helicase involved in ribosome assembly. The protein is ATP-dependent RNA helicase DRS1 (DRS1) of Candida albicans (strain SC5314 / ATCC MYA-2876) (Yeast).